Consider the following 500-residue polypeptide: Signal transduction histidine-protein kinase/phosphatase UhpB (500 aa).

A run of 8 helical transmembrane segments spans residues 8-28 (LITV…LWSI), 78-98 (VALA…LPVA), 112-132 (LLLQ…PWLG), 140-160 (ALLL…VFWH), 185-205 (HLIW…GLPA), 207-224 (LSRF…ALAW), 231-249 (ALIA…QTWH), and 253-273 (VDLL…GAGI). The Cytoplasmic segment spans residues 274 to 500 (QRLRELNQSL…VSVSLPQRYV (227 aa)). The region spanning 311–499 (ELHDDIGQTI…RVSVSLPQRY (189 aa)) is the Histidine kinase domain. H313 bears the Phosphohistidine; by autocatalysis mark.

Post-translationally, autophosphorylated.

Its subcellular location is the cell inner membrane. It catalyses the reaction ATP + protein L-histidine = ADP + protein N-phospho-L-histidine.. Its function is as follows. Part of the UhpABC signaling cascade that controls the expression of the hexose phosphate transporter UhpT. UhpB functions as a membrane-associated protein kinase that autophosphorylates in response to interaction with UhpC, and subsequently transfers its phosphate group to the response regulator UhpA. Can also dephosphorylate UhpA. The chain is Signal transduction histidine-protein kinase/phosphatase UhpB (uhpB) from Salmonella typhimurium (strain LT2 / SGSC1412 / ATCC 700720).